We begin with the raw amino-acid sequence, 835 residues long: Protein translocase subunit SecA (835 aa).

ATP contacts are provided by residues Gln-85, 103 to 107 (GEGKT), and Asp-492. Residues 788 to 807 (VQGEAVHPSSDGEEAKKKPV) form a disordered region. Zn(2+)-binding residues include Cys-819, Cys-821, Cys-830, and Cys-831.

This sequence belongs to the SecA family. In terms of assembly, monomer and homodimer. Part of the essential Sec protein translocation apparatus which comprises SecA, SecYEG and auxiliary proteins SecDF. Other proteins may also be involved. Requires Zn(2+) as cofactor.

The protein localises to the cell membrane. It localises to the cytoplasm. The enzyme catalyses ATP + H2O + cellular proteinSide 1 = ADP + phosphate + cellular proteinSide 2.. In terms of biological role, part of the Sec protein translocase complex. Interacts with the SecYEG preprotein conducting channel. Has a central role in coupling the hydrolysis of ATP to the transfer of proteins into and across the cell membrane, serving as an ATP-driven molecular motor driving the stepwise translocation of polypeptide chains across the membrane. This Bacillus cereus (strain ATCC 14579 / DSM 31 / CCUG 7414 / JCM 2152 / NBRC 15305 / NCIMB 9373 / NCTC 2599 / NRRL B-3711) protein is Protein translocase subunit SecA.